Consider the following 109-residue polypeptide: Urease subunit gamma (109 aa).

Belongs to the urease gamma subunit family. As to quaternary structure, heterotrimer of UreA (gamma), UreB (beta) and UreC (alpha) subunits. Three heterotrimers associate to form the active enzyme.

It localises to the cytoplasm. It catalyses the reaction urea + 2 H2O + H(+) = hydrogencarbonate + 2 NH4(+). The protein operates within nitrogen metabolism; urea degradation; CO(2) and NH(3) from urea (urease route): step 1/1. The chain is Urease subunit gamma from Natronomonas pharaonis (strain ATCC 35678 / DSM 2160 / CIP 103997 / JCM 8858 / NBRC 14720 / NCIMB 2260 / Gabara) (Halobacterium pharaonis).